Reading from the N-terminus, the 644-residue chain is MNLCSSGATASTTSLSSTGQAERSGGVPGGGAEGGGGDGGSGNSGGGGKANDGSAEAPTLCFAGGSGTAGAITGSAELTNANSPANGAGGASGFTGSGQQPTGSNGHSHLHNENNANMPPETRPKMVTVKHPESNKPKPTTKKSKPIQADQDVIKALQRCRDEGIKRLDLSKSSITVIPSTVKECVHLTELYLYSNKIGQLPPEIGCLVSLRNLALNENSLTSLPESLQNCSQLKVLDLRHNKLAEIPPVIYRLRSLTTLYLRFNRITAVADDLRQLVNLTMLSLRENKIRELGSAIGALVNLTTLDVSHNHLEHLPEDIGNCVNLSALDLQHNELLDIPDSIGNLKSLVRLGMRYNRLNSVPATLKNCKSMDEFNVEGNGITQLPDGMLASLSGLTTITLSRNQFASYPTGGPAQFTNVYSINLEHNRIDKIPYGIFSRAKGLTKLNMKENMLTALPLDIGTWVNMVELNLATNALQKLPDDIMNLQNLEILILSNNMLKKIPNTIGNLRRLRILDLEENRIEVLPHEIGLLHELQRLILQTNQITMLPRSIGHLGNLTHLSVSENNLQFLPEEIGSLESLENLYINQNPGLEKLPFELALCQNLKYLNIDKCPLSTIPPEIQAGGPSLVLQWLKMHSPYRQM.

Low complexity predominate over residues 1 to 19 (MNLCSSGATASTTSLSSTG). Disordered regions lie at residues 1-60 (MNLC…APTL) and 82-150 (NSPA…IQAD). Composition is skewed to gly residues over residues 26–50 (GVPG…GGKA) and 87–96 (GAGGASGFTG). A compositionally biased stretch (polar residues) spans 99 to 117 (QQPTGSNGHSHLHNENNAN). LRR repeat units lie at residues 164–185 (GIKR…VKEC), 187–208 (HLTE…IGCL), 210–231 (SLRN…LQNC), 233–254 (QLKV…IYRL), 256–277 (SLTT…LRQL), 279–300 (NLTM…IGAL), 302–323 (NLTT…IGNC), 325–346 (NLSA…IGNL), 348–370 (SLVR…KNCK), 371–392 (SMDE…MLAS), 395–416 (GLTT…GPAQ), 419–440 (NVYS…IFSR), 443–464 (GLTK…IGTW), 466–487 (NMVE…IMNL), 489–510 (NLEI…IGNL), 512–533 (RLRI…IGLL), 535–556 (ELQR…IGHL), 558–579 (NLTH…IGSL), 581–603 (SLEN…LALC), and 605–626 (NLKY…IQAG).

It belongs to the SHOC2 family.

In terms of biological role, acts as a Ras effector and participates in MAPK pathway activation. Probably acts as a regulatory subunit of protein phosphatase that specifically dephosphorylates Raf kinase and stimulate Raf activity at specialized signaling complexes upon Ras activation. The chain is Leucine-rich repeat protein soc-2 homolog (Sur-8) from Drosophila erecta (Fruit fly).